The sequence spans 193 residues: MYHDLIRSELNEAADTLANFLKDDDNINAIQRAAVLLADSFKAGGKVLSCGNGGSHCDAMHFAEELTGRYRENRPGYPAIAISDVSHISCVSNDFGYDYIFSRYVEAVGREGDVLLGISTSGNSGNIIKAIEAARAKGMKVITLTGKDGGKMAGSADIEIRVPHFGYADRIQEIHIKVIHILIQLIEKEMVKA.

The 157-residue stretch at Leu-37–Ala-193 folds into the SIS domain. Asn-52–Gly-54 is a substrate binding site. Zn(2+) is bound by residues His-61 and Glu-65. Residues Glu-65, Asn-93–Asp-94, Ser-119–Ser-121, Ser-124, and Gln-172 contribute to the substrate site. 2 residues coordinate Zn(2+): Gln-172 and His-180.

It belongs to the SIS family. GmhA subfamily. In terms of assembly, homotetramer. Zn(2+) serves as cofactor.

It localises to the cytoplasm. It catalyses the reaction 2 D-sedoheptulose 7-phosphate = D-glycero-alpha-D-manno-heptose 7-phosphate + D-glycero-beta-D-manno-heptose 7-phosphate. It functions in the pathway carbohydrate biosynthesis; D-glycero-D-manno-heptose 7-phosphate biosynthesis; D-glycero-alpha-D-manno-heptose 7-phosphate and D-glycero-beta-D-manno-heptose 7-phosphate from sedoheptulose 7-phosphate: step 1/1. Its function is as follows. Catalyzes the isomerization of sedoheptulose 7-phosphate in D-glycero-D-manno-heptose 7-phosphate. The chain is Phosphoheptose isomerase from Yersinia enterocolitica serotype O:8 / biotype 1B (strain NCTC 13174 / 8081).